We begin with the raw amino-acid sequence, 122 residues long: Probable DNA-directed RNA polymerase II subunit RPB11 (122 aa).

It belongs to the archaeal Rpo11/eukaryotic RPB11/RPC19 RNA polymerase subunit family. Component of the RNA polymerase II (Pol II) complex consisting of 12 subunits.

The protein resides in the nucleus. Functionally, DNA-dependent RNA polymerase catalyzes the transcription of DNA into RNA using the four ribonucleoside triphosphates as substrates. Component of RNA polymerase II which synthesizes mRNA precursors and many functional non-coding RNAs. Pol II is the central component of the basal RNA polymerase II transcription machinery. It is composed of mobile elements that move relative to each other. RPB11 is part of the core element with the central large cleft. The polypeptide is Probable DNA-directed RNA polymerase II subunit RPB11 (rpb-11) (Caenorhabditis briggsae).